A 113-amino-acid polypeptide reads, in one-letter code: Nucleoid-associated protein Cthe_2143 (113 aa).

This sequence belongs to the YbaB/EbfC family. In terms of assembly, homodimer.

The protein resides in the cytoplasm. It is found in the nucleoid. Its function is as follows. Binds to DNA and alters its conformation. May be involved in regulation of gene expression, nucleoid organization and DNA protection. The protein is Nucleoid-associated protein Cthe_2143 of Acetivibrio thermocellus (strain ATCC 27405 / DSM 1237 / JCM 9322 / NBRC 103400 / NCIMB 10682 / NRRL B-4536 / VPI 7372) (Clostridium thermocellum).